The following is a 229-amino-acid chain: Potassium/proton antiporter CemA (229 aa).

The next 4 helical transmembrane spans lie at 7–27 (FTPL…SLSF), 114–134 (ITCF…LVIL), 154–174 (ILLL…ELMI), and 189–209 (IISG…KYWI).

This sequence belongs to the CemA family.

It localises to the plastid. The protein localises to the chloroplast inner membrane. The catalysed reaction is K(+)(in) + H(+)(out) = K(+)(out) + H(+)(in). In terms of biological role, contributes to K(+)/H(+) antiport activity by supporting proton efflux to control proton extrusion and homeostasis in chloroplasts in a light-dependent manner to modulate photosynthesis. Prevents excessive induction of non-photochemical quenching (NPQ) under continuous-light conditions. Indirectly promotes efficient inorganic carbon uptake into chloroplasts. The chain is Potassium/proton antiporter CemA from Platanus occidentalis (Sycamore).